Reading from the N-terminus, the 432-residue chain is Putative D-alanyl-D-alanine carboxypeptidase (432 aa).

The chain crosses the membrane as a helical; Signal-anchor span at residues 7 to 25; it reads ATVLLTFSLSAFAVEYPVL.

This sequence belongs to the peptidase S12 family. YfeW subfamily.

It is found in the cell inner membrane. The catalysed reaction is Preferential cleavage: (Ac)2-L-Lys-D-Ala-|-D-Ala. Also transpeptidation of peptidyl-alanyl moieties that are N-acyl substituents of D-alanine.. This chain is Putative D-alanyl-D-alanine carboxypeptidase, found in Salmonella enteritidis PT4 (strain P125109).